The sequence spans 131 residues: Glycine cleavage system H protein (131 aa).

Residues 24–106 (RVTVGISDHA…YGEGWMFVVE (83 aa)) enclose the Lipoyl-binding domain. Lys65 is subject to N6-lipoyllysine.

It belongs to the GcvH family. The glycine cleavage system is composed of four proteins: P, T, L and H. It depends on (R)-lipoate as a cofactor.

In terms of biological role, the glycine cleavage system catalyzes the degradation of glycine. The H protein shuttles the methylamine group of glycine from the P protein to the T protein. This is Glycine cleavage system H protein from Stenotrophomonas maltophilia (strain K279a).